The following is a 200-amino-acid chain: DNA-directed RNA polymerase subunit 7-like protein (200 aa).

The protein belongs to the eukaryotic RPB7/RPC8 RNA polymerase subunit family.

It localises to the nucleus. This Arabidopsis thaliana (Mouse-ear cress) protein is DNA-directed RNA polymerase subunit 7-like protein (NRPB7L).